A 145-amino-acid polypeptide reads, in one-letter code: 3-dehydroquinate dehydratase (145 aa).

The active-site Proton acceptor is Tyr23. Residues Asn74, His80, and Asp87 each contribute to the substrate site. His100 acts as the Proton donor in catalysis. Residues 101-102 and Arg111 each bind substrate; that span reads IS.

It belongs to the type-II 3-dehydroquinase family. In terms of assembly, homododecamer.

The enzyme catalyses 3-dehydroquinate = 3-dehydroshikimate + H2O. It participates in metabolic intermediate biosynthesis; chorismate biosynthesis; chorismate from D-erythrose 4-phosphate and phosphoenolpyruvate: step 3/7. Functionally, catalyzes a trans-dehydration via an enolate intermediate. This chain is 3-dehydroquinate dehydratase, found in Dictyoglomus turgidum (strain DSM 6724 / Z-1310).